A 242-amino-acid chain; its full sequence is Succinyl-CoA:3-ketoacid coenzyme A transferase subunit A (242 aa).

33 to 39 serves as a coordination point for CoA; the sequence is GGFGLCG.

This sequence belongs to the 3-oxoacid CoA-transferase subunit A family. As to quaternary structure, heterodimer of a subunit A and a subunit B.

The enzyme catalyses a 3-oxo acid + succinyl-CoA = a 3-oxoacyl-CoA + succinate. Its pathway is bacterial outer membrane biogenesis; lipopolysaccharide biosynthesis. This chain is Succinyl-CoA:3-ketoacid coenzyme A transferase subunit A (lpsI), found in Xanthomonas campestris pv. campestris (strain B100).